The sequence spans 223 residues: Uracil-DNA glycosylase (223 aa).

The active-site Proton acceptor is the aspartate 61.

It belongs to the uracil-DNA glycosylase (UDG) superfamily. UNG family.

It localises to the cytoplasm. The catalysed reaction is Hydrolyzes single-stranded DNA or mismatched double-stranded DNA and polynucleotides, releasing free uracil.. In terms of biological role, excises uracil residues from the DNA which can arise as a result of misincorporation of dUMP residues by DNA polymerase or due to deamination of cytosine. The polypeptide is Uracil-DNA glycosylase (Tolumonas auensis (strain DSM 9187 / NBRC 110442 / TA 4)).